Here is a 75-residue protein sequence, read N- to C-terminus: Kappa-scoloptoxin(03)-Ssm1e (75 aa).

The signal sequence occupies residues 1–23; the sequence is MKSSMAILLVMALIIFTLDKNYS.

It belongs to the scoloptoxin-03 family. Post-translationally, contains 3 disulfide bonds. Expressed by the venom gland.

The protein localises to the secreted. Inhibits voltage-gated potassium channels. This chain is Kappa-scoloptoxin(03)-Ssm1e, found in Scolopendra mutilans (Chinese red-headed centipede).